The sequence spans 101 residues: Putative septation protein SpoVG (101 aa).

The protein belongs to the SpoVG family.

Functionally, could be involved in septation. The sequence is that of Putative septation protein SpoVG from Anaeromyxobacter dehalogenans (strain 2CP-C).